We begin with the raw amino-acid sequence, 741 residues long: Ribosome-releasing factor 2, mitochondrial (741 aa).

The transit peptide at 1–29 (MLKYEFLHGLQKRSHYLRQLSGQFFSRSY) directs the protein to the mitochondrion. The 280-residue stretch at 31 to 310 (SKIRNIGILA…AVNSYLPAPE (280 aa)) folds into the tr-type G domain. Residues 40–47 (AHIDAGKT), 104–108 (DTPGH), and 158–161 (NKMD) contribute to the GTP site.

It belongs to the TRAFAC class translation factor GTPase superfamily. Classic translation factor GTPase family. EF-G/EF-2 subfamily.

The protein resides in the mitochondrion. Mitochondrial GTPase that mediates the disassembly of ribosomes from messenger RNA at the termination of mitochondrial protein biosynthesis. Not involved in the GTP-dependent ribosomal translocation step during translation elongation. The chain is Ribosome-releasing factor 2, mitochondrial from Drosophila ananassae (Fruit fly).